Here is a 396-residue protein sequence, read N- to C-terminus: Purine ribonucleoside efflux pump NepI (396 aa).

The Cytoplasmic portion of the chain corresponds to 1 to 21 (MSEFIAENRGANAITRPNWSA). The chain crosses the membrane as a helical span at residues 22-42 (VFSVAFCVACLIIVEFLPVSL). At 43–54 (LTPMAQDLGISE) the chain is on the periplasmic side. The chain crosses the membrane as a helical span at residues 55 to 75 (GVAGQSVTVTAFVAMFASLFI). The Cytoplasmic segment spans residues 76–85 (TQTIQATDRR). The helical transmembrane segment at 86 to 106 (YVVILFAVLLTLSCLLVSFAN) threads the bilayer. Residue S107 is a topological domain, periplasmic. A helical transmembrane segment spans residues 108–128 (FSLLLIGRACLGVALGGFWAI). Over 129–147 (SASLTMRLVPPRTVPKALS) the chain is Cytoplasmic. The helical transmembrane segment at 148 to 168 (VIFGAVSIALVIAAPLGSFLG) threads the bilayer. Residues 169 to 175 (ELIGWRN) are Periplasmic-facing. A helical membrane pass occupies residues 176-196 (VFNAAAAMGVLCIFWIIKSLP). Topologically, residues 197-215 (SLPGEPSHQKQNTFRLLQR) are cytoplasmic. Residues 216–236 (PGVMAGMIAIFMSFAGQFAFF) traverse the membrane as a helical segment. Over 237 to 255 (TYIRPVYMNLAGFGVDGLT) the chain is Periplasmic. Residues 256 to 276 (LVLLSFGIASFVGTSLSSFIL) traverse the membrane as a helical segment. Topologically, residues 277–281 (KRSVK) are cytoplasmic. The chain crosses the membrane as a helical span at residues 282-302 (LALAGAPFVLALSALVLTLWG). Topologically, residues 303–305 (SDK) are periplasmic. A helical transmembrane segment spans residues 306–326 (IVATGVAIIWGLTFALIPVGW). Over 327 to 343 (STWITRSLADQAEKAGS) the chain is Cytoplasmic. A helical membrane pass occupies residues 344 to 364 (IQVAVIQLANTCGAAIGGYAL). At 365–366 (DN) the chain is on the periplasmic side. Residues 367-387 (IGLTSPLMLSGTLMLLTALLV) form a helical membrane-spanning segment. Topologically, residues 388 to 396 (TAKVKMKKS) are cytoplasmic.

The protein belongs to the major facilitator superfamily. DHA1 family. NepI (TC 2.A.1.2.26) subfamily.

It is found in the cell inner membrane. It catalyses the reaction inosine(in) + H(+)(out) = inosine(out) + H(+)(in). The catalysed reaction is guanosine(in) + H(+)(out) = guanosine(out) + H(+)(in). Involved in the efflux of purine ribonucleosides, such as inosine and guanosine. In Escherichia coli O6:K15:H31 (strain 536 / UPEC), this protein is Purine ribonucleoside efflux pump NepI.